Reading from the N-terminus, the 291-residue chain is Lipoyl synthase (291 aa).

Positions 33, 38, 44, 59, 63, 66, and 274 each coordinate [4Fe-4S] cluster. Residues 45-263 (WGEGTATFLI…REAAEAMGFK (219 aa)) enclose the Radical SAM core domain.

This sequence belongs to the radical SAM superfamily. Lipoyl synthase family. It depends on [4Fe-4S] cluster as a cofactor.

It localises to the cytoplasm. It catalyses the reaction [[Fe-S] cluster scaffold protein carrying a second [4Fe-4S](2+) cluster] + N(6)-octanoyl-L-lysyl-[protein] + 2 oxidized [2Fe-2S]-[ferredoxin] + 2 S-adenosyl-L-methionine + 4 H(+) = [[Fe-S] cluster scaffold protein] + N(6)-[(R)-dihydrolipoyl]-L-lysyl-[protein] + 4 Fe(3+) + 2 hydrogen sulfide + 2 5'-deoxyadenosine + 2 L-methionine + 2 reduced [2Fe-2S]-[ferredoxin]. Its pathway is protein modification; protein lipoylation via endogenous pathway; protein N(6)-(lipoyl)lysine from octanoyl-[acyl-carrier-protein]: step 2/2. Catalyzes the radical-mediated insertion of two sulfur atoms into the C-6 and C-8 positions of the octanoyl moiety bound to the lipoyl domains of lipoate-dependent enzymes, thereby converting the octanoylated domains into lipoylated derivatives. The sequence is that of Lipoyl synthase from Pyrobaculum calidifontis (strain DSM 21063 / JCM 11548 / VA1).